Reading from the N-terminus, the 56-residue chain is Zinc finger mu-protein HVO_0758 (56 aa).

Residues C23, C26, C45, and C48 each coordinate Zn(2+). 2 short sequence motifs (c(P)XCG motif) span residues 23 to 27 and 45 to 49; these read CSECG and CADCG.

Monomer.

In terms of biological role, zinc-binding protein that binds one zinc ion. Is involved in biofilm formation, swarming and glycerol metabolism regulation. The polypeptide is Zinc finger mu-protein HVO_0758 (Haloferax volcanii (strain ATCC 29605 / DSM 3757 / JCM 8879 / NBRC 14742 / NCIMB 2012 / VKM B-1768 / DS2) (Halobacterium volcanii)).